Here is a 250-residue protein sequence, read N- to C-terminus: Uracil-DNA glycosylase (250 aa).

Residue aspartate 91 is the Proton acceptor of the active site.

Belongs to the uracil-DNA glycosylase (UDG) superfamily. UNG family.

The protein resides in the host nucleus. The enzyme catalyses Hydrolyzes single-stranded DNA or mismatched double-stranded DNA and polynucleotides, releasing free uracil.. Its function is as follows. Excises uracil residues from the DNA which can arise as a result of misincorporation of dUMP residues by DNA polymerase or due to deamination of cytosine. Excises uracil residues from the DNA which can arise as a result of misincorporation of dUMP residues by DNA polymerase or deamination of cytosines. Therefore may reduce deleterious uracil incorporation into the viral genome, particularly in terminally differentiated cells which lack DNA repair enzymes. This is Uracil-DNA glycosylase (UL114) from Homo sapiens (Human).